Here is a 576-residue protein sequence, read N- to C-terminus: Zinc finger protein 791 (576 aa).

Residues 4–90 (VAFKDVSVSF…AETFSPNLSV (87 aa)) enclose the KRAB domain. C2H2-type zinc fingers lie at residues 100–122 (YECTICGKVFMRLSSLTRHMRSH), 132–154 (YKCKECGKAFSYLKSFQRHERSH), 160–182 (YKCKQCGKTFIYHQPFQRHEQTH), 188–210 (YECKQCGKALSCSSSLRVHERIH), 216–238 (YECKQCGKAFSCSSSIRVHERTH), 244–266 (YACKECGKAFISHTSVLTHMITH), 272–294 (YKCKECGKAFIFPSFLRVHERIH), 300–322 (YTCKQCGKAFRCSTSIQIHERIH), 328–350 (YKCKECGKSFSARPAFRVHVRVH), 356–378 (YKCKECGKAFSRISYFRIHERTH), 384–406 (YECKKCGKTFNYPLDLQIHKRNH), 412–434 (YECKECAKTFISLENFRRHMITH), 440–462 (YKCRDCGKVFIFPSALRTHERTH), 468–490 (YECKQCGKAFSCSSYIRIHKRTH), 496–518 (YECKECGKAFIYPTSFQGHMRMH), 524–546 (YKCKECGKAFSLHSSFQRHTRIH), and 552–574 (LECKQCGKAFSLSTSLKKHMRMH).

Belongs to the krueppel C2H2-type zinc-finger protein family.

It is found in the nucleus. Its function is as follows. May be involved in transcriptional regulation. The sequence is that of Zinc finger protein 791 (ZNF791) from Pongo abelii (Sumatran orangutan).